Reading from the N-terminus, the 440-residue chain is tRNA (guanine(37)-N(1))-methyltransferase (440 aa).

S-adenosyl-L-methionine-binding positions include H217, 255 to 256 (DL), 283 to 284 (DG), and N315.

The protein belongs to the class I-like SAM-binding methyltransferase superfamily. TRM5/TYW2 family. As to quaternary structure, monomer.

It localises to the mitochondrion matrix. The protein localises to the nucleus. It is found in the cytoplasm. It catalyses the reaction guanosine(37) in tRNA + S-adenosyl-L-methionine = N(1)-methylguanosine(37) in tRNA + S-adenosyl-L-homocysteine + H(+). Functionally, specifically methylates the N1 position of guanosine-37 in various cytoplasmic and mitochondrial tRNAs. Methylation is not dependent on the nature of the nucleoside 5' of the target nucleoside. This is the first step in the biosynthesis of wybutosine (yW), a modified base adjacent to the anticodon of tRNAs and required for accurate decoding. The sequence is that of tRNA (guanine(37)-N(1))-methyltransferase from Drosophila pseudoobscura pseudoobscura (Fruit fly).